The sequence spans 51 residues: Large ribosomal subunit protein eL39x (51 aa).

The protein belongs to the eukaryotic ribosomal protein eL39 family.

The chain is Large ribosomal subunit protein eL39x (RPL39C) from Oryza sativa subsp. japonica (Rice).